A 185-amino-acid polypeptide reads, in one-letter code: Photosystem I assembly protein Ycf4 (185 aa).

The next 2 helical transmembrane spans lie at 20-40 and 57-77; these read GNFF…SVGA and ILFF…LFIS.

It belongs to the Ycf4 family.

The protein resides in the plastid. It is found in the chloroplast thylakoid membrane. Seems to be required for the assembly of the photosystem I complex. In Agrostis stolonifera (Creeping bentgrass), this protein is Photosystem I assembly protein Ycf4.